A 355-amino-acid chain; its full sequence is Chromatin modification-related protein EAF3 (355 aa).

The Tudor-knot domain occupies 3 to 77 (EVGGKCLAYH…WDEWVSVDRI (75 aa)). Positions 98 to 150 (ASLAQQQKTKNGGSAKRGGGGAHSESNHGGRRSGSGDRRDSNAEERGIVPSEG) are disordered. Positions 131–144 (GSGDRRDSNAEERG) are enriched in basic and acidic residues. The 191-residue stretch at 163–353 (SRNKLRIHIP…TSSQYEGVAL (191 aa)) folds into the MRG domain.

It belongs to the MRG family. As to quaternary structure, component of the NuA4 histone acetyltransferase complex.

The protein resides in the nucleus. Its function is as follows. Involved in deacetylation of histones, chromatin assembly and chromosome segregation. May act as a transcriptional oscillator, directing histone deacetylases to specific chromosomal domains. Component of the NuA4 histone acetyltransferase complex which is involved in transcriptional activation of selected genes principally by acetylation of nucleosomal histone H4 and H2A. The NuA4 complex is also involved in DNA repair. The sequence is that of Chromatin modification-related protein EAF3 (EAF3) from Candida glabrata (strain ATCC 2001 / BCRC 20586 / JCM 3761 / NBRC 0622 / NRRL Y-65 / CBS 138) (Yeast).